The following is a 610-amino-acid chain: Putative protein tag-250 (610 aa).

2 Tudor domains span residues 149–260 (VALK…LLPP) and 386–506 (MPMS…KIGG).

The protein is Putative protein tag-250 (tag-250) of Caenorhabditis elegans.